The primary structure comprises 362 residues: Holliday junction branch migration complex subunit RuvB (362 aa).

Positions 4–186 (PDRPQRLVEQ…FGIPLRMQFY (183 aa)) are large ATPase domain (RuvB-L). ATP contacts are provided by residues I25, R26, G67, K70, T71, T72, 133–135 (EDF), R176, Y186, and R223. T71 provides a ligand contact to Mg(2+). The interval 187-257 (EPEELQLIVA…AAGGALTRLE (71 aa)) is small ATPAse domain (RuvB-S). The interval 260-362 (RLGFDAMDRR…GTPEGEGEDV (103 aa)) is head domain (RuvB-H). The DNA site is built by R296, R315, and R320.

It belongs to the RuvB family. As to quaternary structure, homohexamer. Forms an RuvA(8)-RuvB(12)-Holliday junction (HJ) complex. HJ DNA is sandwiched between 2 RuvA tetramers; dsDNA enters through RuvA and exits via RuvB. An RuvB hexamer assembles on each DNA strand where it exits the tetramer. Each RuvB hexamer is contacted by two RuvA subunits (via domain III) on 2 adjacent RuvB subunits; this complex drives branch migration. In the full resolvosome a probable DNA-RuvA(4)-RuvB(12)-RuvC(2) complex forms which resolves the HJ.

Its subcellular location is the cytoplasm. It carries out the reaction ATP + H2O = ADP + phosphate + H(+). In terms of biological role, the RuvA-RuvB-RuvC complex processes Holliday junction (HJ) DNA during genetic recombination and DNA repair, while the RuvA-RuvB complex plays an important role in the rescue of blocked DNA replication forks via replication fork reversal (RFR). RuvA specifically binds to HJ cruciform DNA, conferring on it an open structure. The RuvB hexamer acts as an ATP-dependent pump, pulling dsDNA into and through the RuvAB complex. RuvB forms 2 homohexamers on either side of HJ DNA bound by 1 or 2 RuvA tetramers; 4 subunits per hexamer contact DNA at a time. Coordinated motions by a converter formed by DNA-disengaged RuvB subunits stimulates ATP hydrolysis and nucleotide exchange. Immobilization of the converter enables RuvB to convert the ATP-contained energy into a lever motion, pulling 2 nucleotides of DNA out of the RuvA tetramer per ATP hydrolyzed, thus driving DNA branch migration. The RuvB motors rotate together with the DNA substrate, which together with the progressing nucleotide cycle form the mechanistic basis for DNA recombination by continuous HJ branch migration. Branch migration allows RuvC to scan DNA until it finds its consensus sequence, where it cleaves and resolves cruciform DNA. This Rhodospirillum centenum (strain ATCC 51521 / SW) protein is Holliday junction branch migration complex subunit RuvB.